The chain runs to 275 residues: tRNA pseudouridine synthase A (275 aa).

Catalysis depends on Asp-55, which acts as the Nucleophile. Position 111 (Tyr-111) interacts with substrate.

The protein belongs to the tRNA pseudouridine synthase TruA family.

It catalyses the reaction uridine(38/39/40) in tRNA = pseudouridine(38/39/40) in tRNA. Its function is as follows. Formation of pseudouridine at positions 38, 39 and 40 in the anticodon stem and loop of transfer RNAs. The chain is tRNA pseudouridine synthase A from Methanococcoides burtonii (strain DSM 6242 / NBRC 107633 / OCM 468 / ACE-M).